The sequence spans 256 residues: Protein FixA (256 aa).

It belongs to the ETF beta-subunit/FixA family. In terms of assembly, heterodimer of FixA and FixB.

It participates in amine and polyamine metabolism; carnitine metabolism. Required for anaerobic carnitine reduction. May bring reductant to CaiA. This is Protein FixA from Salmonella paratyphi A (strain ATCC 9150 / SARB42).